We begin with the raw amino-acid sequence, 325 residues long: Diacylglycerol acyltransferase/mycolyltransferase Ag85B (325 aa).

Residues 1-40 form the signal peptide; the sequence is MTDVSRKIRAWGRRLMIGTAAAVVLPGLVGLAGGAATAGA. 82–83 contributes to the substrate binding site; that stretch reads LR. The interval 98 to 108 is fibronectin-binding; the sequence is FEWYYQSGLSI. Cys-127 and Cys-132 are joined by a disulfide. Substrate is bound by residues Ser-166 and Asp-194. Catalysis depends on Ser-166, which acts as the Nucleophile. Glu-270 is an active-site residue. Substrate contacts are provided by residues 272–275, Lys-279, and 302–304; these read FVRS and HSW. Residue His-302 is part of the active site.

It belongs to the mycobacterial A85 antigen family.

The protein localises to the secreted. It catalyses the reaction 2 alpha,alpha'-trehalose 6-mycolate = alpha,alpha'-trehalose 6,6'-bismycolate + alpha,alpha-trehalose. The enzyme catalyses an acyl-CoA + a 1,2-diacyl-sn-glycerol = a triacyl-sn-glycerol + CoA. Functionally, the antigen 85 proteins (FbpA, FbpB, FbpC) are responsible for the high affinity of mycobacteria for fibronectin, a large adhesive glycoprotein, which facilitates the attachment of Mycobacteria to murine alveolar macrophages (AMs). They also help to maintain the integrity of the cell wall by catalyzing the transfer of mycolic acids to cell wall arabinogalactan and through the synthesis of alpha,alpha-trehalose dimycolate (TDM, cord factor). They catalyze the transfer of a mycoloyl residue from one molecule of alpha,alpha-trehalose monomycolate (TMM) to another TMM, leading to the formation of TDM. This Mycobacterium bovis (strain BCG / Pasteur 1173P2) protein is Diacylglycerol acyltransferase/mycolyltransferase Ag85B (fbpB).